Reading from the N-terminus, the 277-residue chain is Thiazole synthase (277 aa).

Lys119 (schiff-base intermediate with DXP) is an active-site residue. Residues Gly180, 206–207, and 228–229 each bind 1-deoxy-D-xylulose 5-phosphate; these read AG and NT.

This sequence belongs to the ThiG family. As to quaternary structure, homotetramer. Forms heterodimers with either ThiH or ThiS.

It is found in the plastid. The protein localises to the chloroplast. It catalyses the reaction [ThiS sulfur-carrier protein]-C-terminal-Gly-aminoethanethioate + 2-iminoacetate + 1-deoxy-D-xylulose 5-phosphate = [ThiS sulfur-carrier protein]-C-terminal Gly-Gly + 2-[(2R,5Z)-2-carboxy-4-methylthiazol-5(2H)-ylidene]ethyl phosphate + 2 H2O + H(+). Its pathway is cofactor biosynthesis; thiamine diphosphate biosynthesis. Functionally, catalyzes the rearrangement of 1-deoxy-D-xylulose 5-phosphate (DXP) to produce the thiazole phosphate moiety of thiamine. Sulfur is provided by the thiocarboxylate moiety of the carrier protein ThiS. In vitro, sulfur can be provided by H(2)S. In Pyropia yezoensis (Susabi-nori), this protein is Thiazole synthase.